Here is a 221-residue protein sequence, read N- to C-terminus: Vesicle-associated membrane protein 714 (221 aa).

A2 carries the post-translational modification N-acetylalanine. At 2-190 (AIVYAVVARG…RRALWMKNAK (189 aa)) the chain is on the cytoplasmic side. Residues 7-112 (VVARGTVVLA…AMNDEFSRVL (106 aa)) form the Longin domain. The region spanning 127–187 (TLNRVRGEVS…KRLRRALWMK (61 aa)) is the v-SNARE coiled-coil homology domain. The chain crosses the membrane as a helical; Anchor for type IV membrane protein span at residues 191 to 211 (LLVLLTCLIVFLLYIIIASFC). At 212 to 221 (GGITLPSCRS) the chain is on the vesicular side.

It belongs to the synaptobrevin family. In terms of tissue distribution, highly expressed in leaves, stems and roots. Detected in flowers.

It is found in the golgi apparatus membrane. Involved in the targeting and/or fusion of transport vesicles to their target membrane. The sequence is that of Vesicle-associated membrane protein 714 from Arabidopsis thaliana (Mouse-ear cress).